A 452-amino-acid chain; its full sequence is uncharacterized protein (452 aa).

The TRAM domain maps to 3–61 (KVKIGEKYEVDITSMGHEGEGVGRIDGIAVFVKGALKGERVIVEIEEVHKNYLKGYTVK). [4Fe-4S] cluster-binding residues include Cys74, Cys80, Cys83, and Cys160. S-adenosyl-L-methionine is bound by residues Gln284, Tyr313, Glu334, and Asp382. Cys409 functions as the Nucleophile in the catalytic mechanism.

The protein belongs to the class I-like SAM-binding methyltransferase superfamily. RNA M5U methyltransferase family.

This is an uncharacterized protein from Caldanaerobacter subterraneus subsp. tengcongensis (strain DSM 15242 / JCM 11007 / NBRC 100824 / MB4) (Thermoanaerobacter tengcongensis).